Here is a 197-residue protein sequence, read N- to C-terminus: uncharacterized protein (197 aa).

Helical transmembrane passes span 9–29 (IYILQTLGSLYLLIVLLRFIL), 67–87 (LASLVLAILIQLVLMILILML), 104–124 (IIAVTSLFLKVFFFALIISVI), and 160–180 (GLDLSPIFAFLALKLIDMLVI).

Belongs to the YggT family.

The protein resides in the cell membrane. This is an uncharacterized protein from Pseudomonas aeruginosa (strain ATCC 15692 / DSM 22644 / CIP 104116 / JCM 14847 / LMG 12228 / 1C / PRS 101 / PAO1).